The primary structure comprises 100 residues: Urease subunit gamma (100 aa).

The protein belongs to the urease gamma subunit family. As to quaternary structure, heterotrimer of UreA (gamma), UreB (beta) and UreC (alpha) subunits. Three heterotrimers associate to form the active enzyme.

The protein resides in the cytoplasm. It catalyses the reaction urea + 2 H2O + H(+) = hydrogencarbonate + 2 NH4(+). It participates in nitrogen metabolism; urea degradation; CO(2) and NH(3) from urea (urease route): step 1/1. This is Urease subunit gamma from Paraburkholderia phytofirmans (strain DSM 17436 / LMG 22146 / PsJN) (Burkholderia phytofirmans).